We begin with the raw amino-acid sequence, 141 residues long: Large ribosomal subunit protein uL11 (141 aa).

Belongs to the universal ribosomal protein uL11 family. Part of the ribosomal stalk of the 50S ribosomal subunit. Interacts with L10 and the large rRNA to form the base of the stalk. L10 forms an elongated spine to which L12 dimers bind in a sequential fashion forming a multimeric L10(L12)X complex. In terms of processing, one or more lysine residues are methylated.

Functionally, forms part of the ribosomal stalk which helps the ribosome interact with GTP-bound translation factors. The protein is Large ribosomal subunit protein uL11 of Microcystis aeruginosa (strain NIES-843 / IAM M-2473).